Here is a 218-residue protein sequence, read N- to C-terminus: Sodium channel regulatory subunit beta-1 (218 aa).

Positions 1-18 (MGRLLALVVGAALVSSAC) are cleaved as a signal peptide. Residues 19 to 157 (GGCVEVDSET…DKANRDMASI (139 aa)) are Extracellular-facing. 2 disulfides stabilise this stretch: C21–C43 and C40–C121. The region spanning 22–150 (VEVDSETEAV…KIHIEVVDKA (129 aa)) is the Ig-like C2-type domain. N-linked (GlcNAc...) asparagine glycans are attached at residues N93, N110, N114, and N135. Residues 158-179 (VSEIMMYVLIVVLTIWLVAEMI) traverse the membrane as a helical segment. Topologically, residues 180–218 (YCYKKIAAATETAAQENASEYLAITSESKENCTGVQVAE) are cytoplasmic.

This sequence belongs to the sodium channel auxiliary subunit SCN1B (TC 8.A.17) family. Voltage-gated sodium (Nav) channel consists of an ion-conducting pore-forming alpha subunit functional on its own that is regulated by one or more beta subunits. Interacts with SCN1A; regulatory subunit of SCN1A/Nav1.1. Interacts with SCN3A; regulatory subunit of SCN3A/Nav1.3. Interacts with SCN4A; regulatory subunit of SCN4A/Nav1.4. Interacts with SCN5A; regulatory subunit of SCN5A/Nav1.5. Interacts with SCN8A; regulatory subunit of SCN8A/Nav1.6. Interacts with SCN9A; regulatory subunit of SCN9A/Nav1.7. Interacts with SCN10A; regulatory subunit of SCN10A/Nav1.8. Interacts with NFASC. Interacts with TMEM65. The overall expression of isoform 1 and isoform 2 is very similar. Isoform 1 is abundantly expressed in skeletal muscle, heart and brain. Isoform 2 is highly expressed in brain and skeletal muscle and present at a very low level in heart, placenta, lung, liver, kidney and pancreas. In brain, isoform 2 is most abundant in the cerebellum, followed by the cerebral cortex and occipital lobe, while isoform 1 levels are higher in the cortex compared to the cerebellum. Isoform 2 is expressed in many regions of the brain, including cerebellar Purkinje cells, cortex pyramidal neurons and many of the neuronal fibers throughout the brain (at protein level). Also detected in dorsal root ganglion, in fibers of the spinal nerve and in cortical neurons and their processes (at protein level).

The protein localises to the cell membrane. It is found in the perikaryon. Its subcellular location is the cell projection. It localises to the axon. The protein resides in the secreted. Functionally, regulatory subunit of multiple voltage-gated sodium (Nav) channels directly mediating the depolarization of excitable membranes. Navs, also called VGSCs (voltage-gated sodium channels) or VDSCs (voltage-dependent sodium channels), operate by switching between closed and open conformations depending on the voltage difference across the membrane. In the open conformation they allow Na(+) ions to selectively pass through the pore, along their electrochemical gradient. The influx of Na+ ions provokes membrane depolarization, initiating the propagation of electrical signals throughout cells and tissues. The accessory beta subunits participate in localization and functional modulation of the Nav channels. Modulates the activity of SCN1A/Nav1.1, SCN2A/Nav1.2, SCN3A/Nav1.3, SCN4A/Nav1.4, SCN5A/Nav1.5, SCN8A/Nav1.6, SCN9A/Nav1.7 and SCN10A/Nav1.8. Cell adhesion molecule that plays a critical role in neuronal migration and pathfinding during brain development. Stimulates neurite outgrowth. Has no regulatory function on the SCN2A sodium channel complex. This is Sodium channel regulatory subunit beta-1 from Homo sapiens (Human).